Here is a 259-residue protein sequence, read N- to C-terminus: Small ribosomal subunit protein eS1 (259 aa).

Disordered stretches follow at residues 1–23 (MAVG…KTAD) and 235–259 (ESKS…VDSV). The segment covering 8-19 (KVTKGGKKGGKK) has biased composition (basic residues). Positions 246 to 259 (SRPDHYEPPKVDSV) are enriched in basic and acidic residues.

This sequence belongs to the eukaryotic ribosomal protein eS1 family. In terms of assembly, component of the small ribosomal subunit. Mature ribosomes consist of a small (40S) and a large (60S) subunit. The 40S subunit contains about 33 different proteins and 1 molecule of RNA (18S). The 60S subunit contains about 49 different proteins and 3 molecules of RNA (28S, 5.8S and 5S).

The protein resides in the cytoplasm. This chain is Small ribosomal subunit protein eS1, found in Schistosoma japonicum (Blood fluke).